Consider the following 361-residue polypeptide: tRNA/tmRNA (uracil-C(5))-methyltransferase (361 aa).

Residues Q183, Y211, N216, E232, and D294 each coordinate S-adenosyl-L-methionine. C319 functions as the Nucleophile in the catalytic mechanism. The Proton acceptor role is filled by E353.

It belongs to the class I-like SAM-binding methyltransferase superfamily. RNA M5U methyltransferase family. TrmA subfamily.

The enzyme catalyses uridine(54) in tRNA + S-adenosyl-L-methionine = 5-methyluridine(54) in tRNA + S-adenosyl-L-homocysteine + H(+). The catalysed reaction is uridine(341) in tmRNA + S-adenosyl-L-methionine = 5-methyluridine(341) in tmRNA + S-adenosyl-L-homocysteine + H(+). In terms of biological role, dual-specificity methyltransferase that catalyzes the formation of 5-methyluridine at position 54 (m5U54) in all tRNAs, and that of position 341 (m5U341) in tmRNA (transfer-mRNA). This chain is tRNA/tmRNA (uracil-C(5))-methyltransferase, found in Acinetobacter baylyi (strain ATCC 33305 / BD413 / ADP1).